A 184-amino-acid chain; its full sequence is Protein MEH1 (184 aa).

Gly2 carries the N-myristoyl glycine lipid modification. Residues Cys7 and Cys8 are each lipidated (S-palmitoyl cysteine). The stretch at Gln30–Leu71 forms a coiled coil. A disordered region spans residues Leu89–Pro147. The span at Ala92–Gly112 shows a compositional bias: basic and acidic residues. Positions Ser117–Pro147 are enriched in polar residues. 2 positions are modified to phosphoserine: Ser146 and Ser149.

Component of the GSE complex composed of GTR1, GTR2, SLM4, MEH1 and LTV1. Component of the EGO complex, at least composed of GTR2, SLM4 and MEH1.

It localises to the vacuole membrane. Its function is as follows. Component of the GSE complex, a GTPase complex required for intracellular sorting of GAP1 out of the endosome. Component of the EGO complex, a complex involved in the regulation of microautophagy. The chain is Protein MEH1 (MEH1) from Saccharomyces cerevisiae (strain ATCC 204508 / S288c) (Baker's yeast).